The primary structure comprises 651 residues: Acetyl-coenzyme A synthetase (651 aa).

CoA contacts are provided by residues 190–193 (RRGK) and threonine 311. Residues 387–389 (GEP), 411–416 (DTWWQT), aspartate 508, and arginine 523 each bind ATP. Serine 531 serves as a coordination point for CoA. Residue arginine 534 participates in ATP binding. Valine 545, histidine 547, and valine 550 together coordinate Mg(2+). Lysine 617 is modified (N6-acetyllysine).

This sequence belongs to the ATP-dependent AMP-binding enzyme family. The cofactor is Mg(2+). Post-translationally, acetylated. Deacetylation by the SIR2-homolog deacetylase activates the enzyme.

It carries out the reaction acetate + ATP + CoA = acetyl-CoA + AMP + diphosphate. Functionally, catalyzes the conversion of acetate into acetyl-CoA (AcCoA), an essential intermediate at the junction of anabolic and catabolic pathways. AcsA undergoes a two-step reaction. In the first half reaction, AcsA combines acetate with ATP to form acetyl-adenylate (AcAMP) intermediate. In the second half reaction, it can then transfer the acetyl group from AcAMP to the sulfhydryl group of CoA, forming the product AcCoA. M.tuberculosis may use AcsA for both acetate and propionate assimilation. This chain is Acetyl-coenzyme A synthetase, found in Mycobacterium tuberculosis (strain CDC 1551 / Oshkosh).